The primary structure comprises 254 residues: Phosphoribosylaminoimidazole-succinocarboxamide synthase (254 aa).

Belongs to the SAICAR synthetase family.

The catalysed reaction is 5-amino-1-(5-phospho-D-ribosyl)imidazole-4-carboxylate + L-aspartate + ATP = (2S)-2-[5-amino-1-(5-phospho-beta-D-ribosyl)imidazole-4-carboxamido]succinate + ADP + phosphate + 2 H(+). The protein operates within purine metabolism; IMP biosynthesis via de novo pathway; 5-amino-1-(5-phospho-D-ribosyl)imidazole-4-carboxamide from 5-amino-1-(5-phospho-D-ribosyl)imidazole-4-carboxylate: step 1/2. The protein is Phosphoribosylaminoimidazole-succinocarboxamide synthase of Gluconacetobacter diazotrophicus (strain ATCC 49037 / DSM 5601 / CCUG 37298 / CIP 103539 / LMG 7603 / PAl5).